A 384-amino-acid polypeptide reads, in one-letter code: Na(+)/H(+) antiporter NhaA (384 aa).

Transmembrane regions (helical) follow at residues 7 to 27, 58 to 78, 94 to 114, 124 to 144, 153 to 173, 179 to 199, 204 to 224, 256 to 276, 285 to 305, 325 to 345, and 357 to 377; these read FYNL…LAII, LLLW…GLEI, LVPA…FIFF, GWAI…SLLG, ILLT…IALF, SLLS…LNYF, ISVF…SGVH, VVFL…FVGL, VVLG…FLSL, VYGI…IGSL, and MVKI…FLVL.

Belongs to the NhaA Na(+)/H(+) (TC 2.A.33) antiporter family.

The protein resides in the cell inner membrane. The enzyme catalyses Na(+)(in) + 2 H(+)(out) = Na(+)(out) + 2 H(+)(in). Functionally, na(+)/H(+) antiporter that extrudes sodium in exchange for external protons. The sequence is that of Na(+)/H(+) antiporter NhaA from Legionella pneumophila (strain Corby).